Reading from the N-terminus, the 217-residue chain is Deoxyribose-phosphate aldolase (217 aa).

Residue Asp89 is the Proton donor/acceptor of the active site. The Schiff-base intermediate with acetaldehyde role is filled by Lys151. Lys180 (proton donor/acceptor) is an active-site residue.

It belongs to the DeoC/FbaB aldolase family. DeoC type 1 subfamily.

It is found in the cytoplasm. The enzyme catalyses 2-deoxy-D-ribose 5-phosphate = D-glyceraldehyde 3-phosphate + acetaldehyde. Its pathway is carbohydrate degradation; 2-deoxy-D-ribose 1-phosphate degradation; D-glyceraldehyde 3-phosphate and acetaldehyde from 2-deoxy-alpha-D-ribose 1-phosphate: step 2/2. Functionally, catalyzes a reversible aldol reaction between acetaldehyde and D-glyceraldehyde 3-phosphate to generate 2-deoxy-D-ribose 5-phosphate. This Metamycoplasma arthritidis (strain 158L3-1) (Mycoplasma arthritidis) protein is Deoxyribose-phosphate aldolase.